The chain runs to 331 residues: L-lactate dehydrogenase A chain (331 aa).

Residues glycine 29–lysine 57 and arginine 98 each bind NAD(+). Arginine 105, asparagine 137, and arginine 168 together coordinate substrate. Asparagine 137 contributes to the NAD(+) binding site. Residue histidine 192 is the Proton acceptor of the active site. Position 247 (threonine 247) interacts with substrate.

This sequence belongs to the LDH/MDH superfamily. LDH family. As to quaternary structure, homotetramer.

It is found in the cytoplasm. It catalyses the reaction (S)-lactate + NAD(+) = pyruvate + NADH + H(+). It functions in the pathway fermentation; pyruvate fermentation to lactate; (S)-lactate from pyruvate: step 1/1. Its function is as follows. Interconverts simultaneously and stereospecifically pyruvate and lactate with concomitant interconversion of NADH and NAD(+). This Champsocephalus gunnari (Mackerel icefish) protein is L-lactate dehydrogenase A chain (ldha).